The chain runs to 292 residues: Acetylglutamate kinase (292 aa).

Substrate contacts are provided by residues 64-65 (GG), Arg86, and Asn190.

The protein belongs to the acetylglutamate kinase family. ArgB subfamily.

It localises to the cytoplasm. It catalyses the reaction N-acetyl-L-glutamate + ATP = N-acetyl-L-glutamyl 5-phosphate + ADP. Its pathway is amino-acid biosynthesis; L-arginine biosynthesis; N(2)-acetyl-L-ornithine from L-glutamate: step 2/4. Its function is as follows. Catalyzes the ATP-dependent phosphorylation of N-acetyl-L-glutamate. This chain is Acetylglutamate kinase, found in Geotalea daltonii (strain DSM 22248 / JCM 15807 / FRC-32) (Geobacter daltonii).